Reading from the N-terminus, the 374-residue chain is uncharacterized protein (374 aa).

The disordered stretch occupies residues 182–201; that stretch reads PALGESPQGQKSSASSDKAV. Residues 188–197 show a composition bias toward polar residues; it reads PQGQKSSASS.

This is an uncharacterized protein from Rattus norvegicus (Rat).